The chain runs to 293 residues: Formamidopyrimidine-DNA glycosylase (293 aa).

Residue Pro2 is the Schiff-base intermediate with DNA of the active site. Glu3 (proton donor) is an active-site residue. Lys58 functions as the Proton donor; for beta-elimination activity in the catalytic mechanism. Positions 104, 123, and 166 each coordinate DNA. The segment at 257–293 (QVYDREGEPCRTDGCEGVVKRFVQNGRSTFWCPKCQR) adopts an FPG-type zinc-finger fold. Arg283 (proton donor; for delta-elimination activity) is an active-site residue.

It belongs to the FPG family. In terms of assembly, monomer. The cofactor is Zn(2+).

The catalysed reaction is Hydrolysis of DNA containing ring-opened 7-methylguanine residues, releasing 2,6-diamino-4-hydroxy-5-(N-methyl)formamidopyrimidine.. The enzyme catalyses 2'-deoxyribonucleotide-(2'-deoxyribose 5'-phosphate)-2'-deoxyribonucleotide-DNA = a 3'-end 2'-deoxyribonucleotide-(2,3-dehydro-2,3-deoxyribose 5'-phosphate)-DNA + a 5'-end 5'-phospho-2'-deoxyribonucleoside-DNA + H(+). Involved in base excision repair of DNA damaged by oxidation or by mutagenic agents. Acts as a DNA glycosylase that recognizes and removes damaged bases. Has a preference for oxidized purines, such as 7,8-dihydro-8-oxoguanine (8-oxoG). Has AP (apurinic/apyrimidinic) lyase activity and introduces nicks in the DNA strand. Cleaves the DNA backbone by beta-delta elimination to generate a single-strand break at the site of the removed base with both 3'- and 5'-phosphates. This is Formamidopyrimidine-DNA glycosylase from Bradyrhizobium sp. (strain ORS 278).